We begin with the raw amino-acid sequence, 670 residues long: G-protein coupled receptor moody (670 aa).

Residues 1–40 (MSDETTISLEDGYPPLEALTTMVPPADATGFSQSLLTFAA) lie on the Extracellular side of the membrane. The helical transmembrane segment at 41–61 (VMTFLIMIVGICGNLLTVVAL) threads the bilayer. Topologically, residues 62–69 (LKCPKVRN) are cytoplasmic. A helical membrane pass occupies residues 70 to 90 (VAAAFIISLCIADLLFCALVL). The Extracellular portion of the chain corresponds to 91–111 (PFQGLRFVQGTWRHGQVLCRL). A disulfide bridge connects residues Cys-109 and Cys-188. The chain crosses the membrane as a helical span at residues 112-132 (IPFIQYGNIGVSLLCIAMITI). Topologically, residues 133–152 (NRYVMITHHGLYARIYKRHW) are cytoplasmic. The helical transmembrane segment at 153–173 (IAVMIAACWLFSYGMQLPTLL) threads the bilayer. The Extracellular portion of the chain corresponds to 174-202 (GEWGRFGYDSRLQTCSIMTDDHGHSSKTT). A helical transmembrane segment spans residues 203 to 223 (LFITAFVIPCLVIIACYAKIF). At 224–313 (WVVHKSEQRL…AKRNEWRITK (90 aa)) the chain is on the cytoplasmic side. Residues 258 to 302 (LPSGAECQPSNRVSSDSSSSFSIDVPETAPSGKQQPTRVKDQREV) form a disordered region. The span at 267–279 (SNRVSSDSSSSFS) shows a compositional bias: low complexity. A helical membrane pass occupies residues 314–334 (MVLAIFLSFVVCYLPITIVKV). Topologically, residues 335–345 (ADKNVEHPSLH) are extracellular. A helical transmembrane segment spans residues 346 to 366 (ICSYILLYLSACINPIIYVIM). Topologically, residues 367-670 (NKQYRKAYKT…LTAKMKFPKD (304 aa)) are cytoplasmic. Disordered stretches follow at residues 461 to 490 (DLIS…GSNS), 562 to 622 (ELPP…YMNV), and 636 to 670 (TNAV…FPKD). Residues 564–584 (PPTPPATSAPTTPAPPPPSSP) show a composition bias toward pro residues. The segment covering 585–598 (LHPLSTDSSTTTIS) has biased composition (low complexity). Residues 646–660 (GPANTSATVSISGSK) show a composition bias toward polar residues.

Belongs to the G-protein coupled receptor 1 family. As to expression, isoform A and isoform B are expressed in the head. Isoform B only is expressed in the body. Expressed in embryonic glial cells that are involved in ensheathment and insulation of the nervous system. Both isoforms are expressed in glia that insulate the larval and adult nervous system. Also expressed in the germ cells, the gut, and the heart.

It localises to the cell membrane. In terms of biological role, isoform A and isoform B are required in glia to regulate the acute sensitivity to cocaine and to continuously maintain the proper blood-brain barrier (BBB) function. A moody-mediated signaling pathway functions in glia to regulate nervous system insulation and drug-related behaviors. Galphai and Galphao, and the regulator of G protein signaling, loco, are required in the surface glia to achieve effective insulation. The components function by regulating the cortical actin and thereby stabilizing the extended morphology of the surface glia, which in turn is necessary for the formation of septate junctions of sufficient length to achieve proper sealing of the nerve cord. The chain is G-protein coupled receptor moody from Drosophila melanogaster (Fruit fly).